A 495-amino-acid polypeptide reads, in one-letter code: Leucine aminopeptidase 2 (495 aa).

Residues 1–21 form the signal peptide; sequence MKSQLLSLAVAVSTISQGVVG. The PA domain maps to 124-218; the sequence is PPANKIMAEL…EDGKNLASLV (95 aa). Asparagine 142 and asparagine 235 each carry an N-linked (GlcNAc...) asparagine glycan. Positions 259 and 271 each coordinate Zn(2+). N-linked (GlcNAc...) asparagine glycosylation occurs at asparagine 272. Glutamate 303 (proton acceptor) is an active-site residue. Zn(2+) is bound by residues glutamate 304 and aspartate 332. The N-linked (GlcNAc...) asparagine glycan is linked to asparagine 352. Histidine 430 is a Zn(2+) binding site.

This sequence belongs to the peptidase M28 family. M28A subfamily. As to quaternary structure, monomer. The cofactor is Zn(2+).

Its subcellular location is the secreted. In terms of biological role, extracellular aminopeptidase that releases a wide variety of amino acids from natural peptides and contributes to pathogenicity. This is Leucine aminopeptidase 2 (LAP2) from Trichophyton tonsurans (Scalp ringworm fungus).